Consider the following 335-residue polypeptide: DNA polymerase beta (335 aa).

Residue lysine 41 forms a Glycyl lysine isopeptide (Lys-Gly) (interchain with G-Cter in ubiquitin) linkage. Lysine 60 provides a ligand contact to K(+). Lysine 60 lines the Na(+) pocket. Lysine 61 is covalently cross-linked (Glycyl lysine isopeptide (Lys-Gly) (interchain with G-Cter in ubiquitin)). Residues leucine 62 and valine 65 each coordinate K(+). The Na(+) site is built by leucine 62 and valine 65. The Nucleophile; Schiff-base intermediate with DNA; for 5'-dRP lyase activity role is filled by lysine 72. Position 72 is an N6-acetyllysine (lysine 72). A Glycyl lysine isopeptide (Lys-Gly) (interchain with G-Cter in ubiquitin) cross-link involves residue lysine 81. Omega-N-methylarginine; by PRMT6 is present on arginine 83. Residues threonine 101, valine 103, and isoleucine 106 each contribute to the K(+) site. Residues threonine 101, valine 103, and isoleucine 106 each contribute to the Na(+) site. A 2'-deoxyribonucleoside 5'-triphosphate is bound at residue arginine 149. At arginine 152 the chain carries Omega-N-methylarginine; by PRMT6. 4 residues coordinate a 2'-deoxyribonucleoside 5'-triphosphate: serine 180, arginine 183, glycine 189, and aspartate 190. Residues 183–192 (RGAESSGDMD) are DNA-binding. Mg(2+) is bound by residues aspartate 190, aspartate 192, and aspartate 256.

The protein belongs to the DNA polymerase type-X family. As to quaternary structure, monomer. Binds single-stranded DNA (ssDNA). Interacts with APEX1, LIG1, LIG3, FEN1, PCNA and XRCC1. Interacts with HUWE1/ARF-BP1, STUB1/CHIP and USP47. Interacts with FAM168A. It depends on Mg(2+) as a cofactor. Methylation by PRMT6 stimulates the polymerase activity by enhancing DNA binding and processivity. Post-translationally, ubiquitinated at Lys-41, Lys-61 and Lys-81: monoubiquitinated by HUWE1/ARF-BP1. Monoubiquitinated protein is then the target of STUB1/CHIP, which catalyzes polyubiquitination from monoubiquitin, leading to degradation by the proteasome. USP47 mediates the deubiquitination of monoubiquitinated protein, preventing polyubiquitination by STUB1/CHIP and its subsequent degradation.

It is found in the nucleus. Its subcellular location is the cytoplasm. The catalysed reaction is DNA(n) + a 2'-deoxyribonucleoside 5'-triphosphate = DNA(n+1) + diphosphate. It carries out the reaction a 5'-end 2'-deoxyribose-2'-deoxyribonucleotide-DNA = (2E,4S)-4-hydroxypenten-2-al-5-phosphate + a 5'-end 5'-phospho-2'-deoxyribonucleoside-DNA + H(+). The enzyme catalyses 2'-deoxyribonucleotide-(2'-deoxyribose 5'-phosphate)-2'-deoxyribonucleotide-DNA = a 3'-end 2'-deoxyribonucleotide-(2,3-dehydro-2,3-deoxyribose 5'-phosphate)-DNA + a 5'-end 5'-phospho-2'-deoxyribonucleoside-DNA + H(+). Repair polymerase that plays a key role in base-excision repair. During this process, the damaged base is excised by specific DNA glycosylases, the DNA backbone is nicked at the abasic site by an apurinic/apyrimidic (AP) endonuclease, and POLB removes 5'-deoxyribose-phosphate from the preincised AP site acting as a 5'-deoxyribose-phosphate lyase (5'-dRP lyase); through its DNA polymerase activity, it adds one nucleotide to the 3' end of the arising single-nucleotide gap. Conducts 'gap-filling' DNA synthesis in a stepwise distributive fashion rather than in a processive fashion as for other DNA polymerases. It is also able to cleave sugar-phosphate bonds 3' to an intact AP site, acting as an AP lyase. In Mus musculus (Mouse), this protein is DNA polymerase beta (Polb).